The following is a 734-amino-acid chain: MASRFPKFSQGLAQDPTTRRIWFGIATAHDFESHDDITEERLYQKIFASHFGQLAIIFLWTSGNLFHVAWQGNFEAWVRDPLHVRPIAHAIWDLHFGQPAVEAFTRGGAPGPVNIAHSGVYQWWYTIGLRTNEDLYTGALFLLFLSAISLIAGRFHLQPKWKPSVSWFKNAESRLDHHLSGLFGVSSLAWTGHLVHVAIPESRGEHVRWDNFLDVLPYPRGLGPLFTGQWNLYAQNPDSSSHLFGTSQGAGTAILTLLGGFHPQTQSLWLTDIAHHHLAIAFVFFIAGHMYRTNFGIGHSIKDILEAHIPPGGLLGRGHKGLYNTINNSLHFQLGLALASLGVITSLVAQHMYSLPAYAFIAQDFTTQAALYTHHQYIAGFIMTGAFAHGAIFFIRDYNPEQNRDNVLARMLEHKEAIISHLSWASLFLGFHTLGLYVHNDVMLAFGTPEKQILIEPIFAQWIQSAHGKALYGFDVLLSSTNSPAFNAGQSIWLPGWLNAINDNSNSLFLTIGPGDFLVHHAIALGLHTTTLILVKGALDARGSKLMPDKKDFGYSFPCDGPGRGGTCDISAWDAFYLAVFWMLNTIGWVTFYWHWKHITLWQGNVAQFNESSTYLMGWLRDYLWLNSSQLINGYNPFGMNSLSVWAWMFLFGHLVWATGFMFLISWRGYWQELIETLAWAHERTPLANSVRWRDKPVALSIVQARLVGLAHFSVGYIFTYAAFLIASTSGKFG.

A run of 8 helical transmembrane segments spans residues 46-69, 135-158, 175-199, 273-291, 330-353, 369-395, 417-439, and 517-535; these read IFASHFGQLAIIFLWTSGNLFHVA, LYTGALFLLFLSAISLIAGRFHLQ, LDHHLSGLFGVSSLAWTGHLVHVAI, IAHHHLAIAFVFFIAGHMY, LHFQLGLALASLGVITSLVAQHMY, AALYTHHQYIAGFIMTGAFAHGAIFFI, AIISHLSWASLFLGFHTLGLYVH, and FLVHHAIALGLHTTTLILV. Residues Cys559 and Cys568 each contribute to the [4Fe-4S] cluster site. The next 2 helical transmembrane spans lie at 575 to 596 and 643 to 665; these read AFYLAVFWMLNTIGWVTFYWHW and LSVWAWMFLFGHLVWATGFMFLI. 3 residues coordinate chlorophyll a: His654, Met662, and Tyr670. A phylloquinone-binding site is contributed by Trp671. The chain crosses the membrane as a helical span at residues 707 to 727; it reads LVGLAHFSVGYIFTYAAFLIA.

This sequence belongs to the PsaA/PsaB family. As to quaternary structure, the PsaA/B heterodimer binds the P700 chlorophyll special pair and subsequent electron acceptors. PSI consists of a core antenna complex that captures photons, and an electron transfer chain that converts photonic excitation into a charge separation. The eukaryotic PSI reaction center is composed of at least 11 subunits. The cofactor is P700 is a chlorophyll a/chlorophyll a' dimer, A0 is one or more chlorophyll a, A1 is one or both phylloquinones and FX is a shared 4Fe-4S iron-sulfur center..

The protein resides in the plastid. The protein localises to the chloroplast thylakoid membrane. It catalyses the reaction reduced [plastocyanin] + hnu + oxidized [2Fe-2S]-[ferredoxin] = oxidized [plastocyanin] + reduced [2Fe-2S]-[ferredoxin]. In terms of biological role, psaA and PsaB bind P700, the primary electron donor of photosystem I (PSI), as well as the electron acceptors A0, A1 and FX. PSI is a plastocyanin-ferredoxin oxidoreductase, converting photonic excitation into a charge separation, which transfers an electron from the donor P700 chlorophyll pair to the spectroscopically characterized acceptors A0, A1, FX, FA and FB in turn. Oxidized P700 is reduced on the lumenal side of the thylakoid membrane by plastocyanin. The chain is Photosystem I P700 chlorophyll a apoprotein A2 from Cycas taitungensis (Prince sago).